A 405-amino-acid polypeptide reads, in one-letter code: Endo-1,4-beta-xylanase 5 (405 aa).

The first 22 residues, 1–22, serve as a signal peptide directing secretion; the sequence is MTRLATLITLAGLLAVSPGAYA. N-linked (GlcNAc...) asparagine glycosylation is found at asparagine 27 and asparagine 69. Positions 32 to 352 constitute a GH10 domain; sequence STGAEGLNSL…KPAYTSVSSL (321 aa). The Proton donor role is filled by glutamate 166. Asparagine 171 carries an N-linked (GlcNAc...) asparagine glycan. The active-site Nucleophile is glutamate 273. Cysteine 302 and cysteine 308 form a disulfide bridge. The GPI-anchor amidated glycine moiety is linked to residue glycine 380. A propeptide spans 381–405 (removed in mature form); the sequence is AGRETVSIAGLTLALSSLAFGMFML.

It belongs to the glycosyl hydrolase 10 (cellulase F) family.

Its subcellular location is the cell membrane. The protein resides in the secreted. The catalysed reaction is Endohydrolysis of (1-&gt;4)-beta-D-xylosidic linkages in xylans.. It functions in the pathway glycan degradation; xylan degradation. Endo-1,4-beta-xylanase involved in the hydrolysis of xylan, a major structural heterogeneous polysaccharide found in plant biomass representing the second most abundant polysaccharide in the biosphere, after cellulose. This is Endo-1,4-beta-xylanase 5 (XYL5) from Pyricularia grisea (Crabgrass-specific blast fungus).